The following is a 391-amino-acid chain: UPF0229 protein BAA_0633 (391 aa).

Residues 1 to 16 (MGEENQPNYTISQENW) show a composition bias toward polar residues. Disordered regions lie at residues 1–31 (MGEENQPNYTISQENWSLHRKGYDDQQRHQE) and 80–117 (HVGQGNGDSKVGDVVARDGSGGQKQKGPGKGQGAGDAA). The span at 21-31 (KGYDDQQRHQE) shows a compositional bias: basic and acidic residues. Gly residues predominate over residues 98-115 (GSGGQKQKGPGKGQGAGD).

The protein belongs to the UPF0229 family.

This chain is UPF0229 protein BAA_0633, found in Bacillus anthracis (strain A0248).